The primary structure comprises 411 residues: ACT domain-containing protein ACR9 (411 aa).

3 consecutive ACT domains span residues 22-105 (VVTV…NVSK), 111-194 (LLKF…LAGP), and 243-322 (LLQI…VIIV).

Its function is as follows. May bind amino acids. The chain is ACT domain-containing protein ACR9 from Arabidopsis thaliana (Mouse-ear cress).